Here is a 568-residue protein sequence, read N- to C-terminus: Protein phosphatase 1 regulatory inhibitor subunit 16B (568 aa).

Residues 15-55 (EKVPTLERLRAAQKRRAQQLKKWAQYEQDLLHRKRKHERKR) adopt a coiled-coil conformation. Ser69 is modified (phosphoserine). ANK repeat units lie at residues 100 to 129 (DGLT…NVNA), 133 to 162 (ELWT…DLLA), 228 to 257 (QGAT…RVDV), and 261 to 290 (DGWE…SLSA). Ser333, Ser337, and Ser350 each carry phosphoserine. A disordered region spans residues 373-403 (SAAEDQRTSTYNGDIRETRTDQENKDPNPRL). Basic and acidic residues predominate over residues 386 to 403 (DIRETRTDQENKDPNPRL). Ser477 bears the Phosphoserine mark. Low complexity predominate over residues 505 to 517 (SSVARSGESSSEG). Residues 505 to 527 (SSVARSGESSSEGKAPLIGGRTS) form a disordered region. Residues 531 to 560 (SNGTSVYYTVTSGDPPLLKFKAPMEEMEEK) form an ANK 5 repeat. The S-palmitoyl cysteine moiety is linked to residue Cys564. Cys565 bears the Cysteine methyl ester mark. Cys565 is lipidated: S-farnesyl cysteine. Positions 566–568 (RIS) are cleaved as a propeptide — removed in mature form.

As to quaternary structure, interacts with PPP1CA, PPP1CB and MSN. Interacts (via its fourth ankyrin repeat) with the mature dimeric form of RPSA/LAMR1. Interacts with EEF1A1. Interacts with PTEN. Interacts with ECE1. Post-translationally, phosphorylated by PKA and, after PKA priming, by GSK3B. Phosphorylation by GSK3B reduces its association with PP1C and enhances PP1C activity. Dephosphorylation by its associated PP1C results in enhanced association with PP1C, but reduced PP1C activity.

Its subcellular location is the cell membrane. The protein resides in the nucleus. The protein localises to the cell projection. Regulator of protein phosphatase 1 (PP1) that acts as a positive regulator of pulmonary endothelial cell (EC) barrier function. Protects the endothelial barrier from lipopolysaccharide (LPS)-induced vascular leakage. Involved in the regulation of the PI3K/AKT signaling pathway. Involved in the regulation of angiogenesis and endothelial cell proliferation through the control of ECE1 dephosphorylation, trafficking and activity. Involved in the regulation of endothelial cell filopodia extension. May be a downstream target for TGF-beta1 signaling cascade in endothelial cells. Involved in PKA-mediated moesin dephosphorylation which is important in EC barrier protection against thrombin stimulation. Promotes the interaction of PPP1CA with RPSA/LAMR1 and in turn facilitates the dephosphorylation of RPSA/LAMR1. Involved in the dephosphorylation of EEF1A1. The chain is Protein phosphatase 1 regulatory inhibitor subunit 16B (Ppp1r16b) from Mus musculus (Mouse).